Consider the following 141-residue polypeptide: Nucleoside diphosphate kinase (141 aa).

Positions 11, 59, 87, 93, 104, and 114 each coordinate ATP. Histidine 117 serves as the catalytic Pros-phosphohistidine intermediate.

It belongs to the NDK family. As to quaternary structure, homotetramer. It depends on Mg(2+) as a cofactor.

The protein resides in the cytoplasm. It carries out the reaction a 2'-deoxyribonucleoside 5'-diphosphate + ATP = a 2'-deoxyribonucleoside 5'-triphosphate + ADP. The enzyme catalyses a ribonucleoside 5'-diphosphate + ATP = a ribonucleoside 5'-triphosphate + ADP. Functionally, major role in the synthesis of nucleoside triphosphates other than ATP. The ATP gamma phosphate is transferred to the NDP beta phosphate via a ping-pong mechanism, using a phosphorylated active-site intermediate. This Histophilus somni (strain 129Pt) (Haemophilus somnus) protein is Nucleoside diphosphate kinase.